Consider the following 304-residue polypeptide: Probable aspartoacylase (304 aa).

His-13 and Glu-16 together coordinate Zn(2+). Substrate-binding positions include Arg-55 and 62–63 (NR). His-105 serves as a coordination point for Zn(2+). Glu-163 and Tyr-273 together coordinate substrate.

Belongs to the AspA/AstE family. Aspartoacylase subfamily. The cofactor is Zn(2+).

It catalyses the reaction an N-acyl-L-aspartate + H2O = a carboxylate + L-aspartate. In Prochlorococcus marinus (strain MIT 9313), this protein is Probable aspartoacylase.